A 443-amino-acid polypeptide reads, in one-letter code: Enolase B (443 aa).

2 residues coordinate substrate: His156 and Glu165. Glu208 functions as the Proton donor in the catalytic mechanism. Mg(2+) contacts are provided by Asp243, Glu296, and Asp323. Residues Glu296 and Asp323 each coordinate substrate. Catalysis depends on Lys348, which acts as the Proton acceptor. Substrate contacts are provided by residues 375-378 (SHRS) and Lys399.

This sequence belongs to the enolase family. As to quaternary structure, homodimer. The cofactor is Mg(2+).

The protein localises to the cytoplasm. The catalysed reaction is (2R)-2-phosphoglycerate = phosphoenolpyruvate + H2O. It participates in carbohydrate degradation; glycolysis; pyruvate from D-glyceraldehyde 3-phosphate: step 4/5. This is Enolase B (enoB) from Dictyostelium discoideum (Social amoeba).